Consider the following 172-residue polypeptide: Large ribosomal subunit protein uL10 (172 aa).

It belongs to the universal ribosomal protein uL10 family. As to quaternary structure, part of the ribosomal stalk of the 50S ribosomal subunit. The N-terminus interacts with L11 and the large rRNA to form the base of the stalk. The C-terminus forms an elongated spine to which L12 dimers bind in a sequential fashion forming a multimeric L10(L12)X complex.

Forms part of the ribosomal stalk, playing a central role in the interaction of the ribosome with GTP-bound translation factors. The chain is Large ribosomal subunit protein uL10 from Chlorobium luteolum (strain DSM 273 / BCRC 81028 / 2530) (Pelodictyon luteolum).